We begin with the raw amino-acid sequence, 570 residues long: NADPH oxidase 2 (570 aa).

Residues 2-9 (GNWAVNEG) lie on the Cytoplasmic side of the membrane. The helical transmembrane segment at 10–36 (LSIFVILVWLGLNVFLFVWYYRVYDIP) threads the bilayer. The Extracellular segment spans residues 37-46 (PKFFYTRKLL). Residues 47-72 (GSALALARAPAACLNFNCMLILLPVC) traverse the membrane as a helical segment. A Ferric oxidoreductase domain is found at 54–286 (RAPAACLNFN…MFLYLCERLV (233 aa)). Topologically, residues 73–95 (RNLLSFLRGSSACCSTRVRRQLD) are cytoplasmic. The helical transmembrane segment at 96-130 (RNLTFHKMVAWMIALHSAIHTIAHLFNVEWCVNAR) threads the bilayer. Positions 101 and 115 each coordinate heme b. Residues 131 to 163 (VNNSDPYSVALSELGDRQNESYLNFARKRIKNP) are Extracellular-facing. 2 N-linked (GlcNAc...) asparagine glycosylation sites follow: Asn-132 and Asn-149. Lys-161 is covalently cross-linked (Glycyl lysine isopeptide (Lys-Gly) (interchain with G-Cter in ubiquitin)). Residues 164 to 194 (EGGLYLAVTLLAGITGVVITLCLILIITSST) form a helical membrane-spanning segment. Residues 195 to 203 (KTIRRSYFE) lie on the Cytoplasmic side of the membrane. Arg-199 and Ser-200 together coordinate FAD. A helical membrane pass occupies residues 204-222 (VFWYTHHLFVIFFIGLAIH). Trp-206, His-209, His-222, Arg-226, and Ile-227 together coordinate heme b. Over 223–267 (GAERIVRGQTAESLAVHNITVCEQKISEWGKIKECPIPQFAGNPP) the chain is Extracellular. A glycan (N-linked (GlcNAc...) asparagine) is linked at Asn-240. Lys-255 participates in a covalent cross-link: Glycyl lysine isopeptide (Lys-Gly) (interchain with G-Cter in ubiquitin). 3 residues coordinate heme b: Met-268, Tyr-280, and Arg-287. The helical transmembrane segment at 268-285 (MTWKWIVGPMFLYLCERL) threads the bilayer. Over 286-570 (VRFWRSQQKV…VHFIFNKENF (285 aa)) the chain is Cytoplasmic. The 111-residue stretch at 287–397 (RFWRSQQKVV…DGPFGTASED (111 aa)) folds into the FAD-binding FR-type domain. Residues Lys-294, Lys-299, Lys-306, Lys-328, and Lys-334 each participate in a glycyl lysine isopeptide (Lys-Gly) (interchain with G-Cter in ubiquitin) cross-link. FAD is bound by residues Trp-337, His-338, Pro-339, Thr-341, His-354, Arg-356, Trp-361, and Thr-362. A Glycyl lysine isopeptide (Lys-Gly) (interchain with G-Cter in ubiquitin) cross-link involves residue Lys-381. Residues Ile-411, Arg-446, and Thr-481 each coordinate NADPH. Lys-506 is covalently cross-linked (Glycyl lysine isopeptide (Lys-Gly) (interchain with G-Cter in ubiquitin)). Arg-513 is a binding site for NADPH. Lys-567 participates in a covalent cross-link: Glycyl lysine isopeptide (Lys-Gly) (interchain with G-Cter in ubiquitin).

In terms of assembly, component of the phagocyte NADPH oxidase core complex/cytochrome b558 complex, composed of CYBB (heavy chain (beta)) and CYBA (light chain (alpha)). Component of the phagocyte NADPH oxidase complex composed of an obligatory core heterodimer formed by the membrane proteins CYBA and CYBB and the cytosolic regulatory subunits NCF1/p47-phox, NCF2/p67-phox, NCF4/p40-phox and the small GTPase RAC1 or RAC2. Interacts with NCF1 (phosphorylated form). Interacts with NCF2; the interaction is enhanced in the presence of GBP7. Interacts with RAC2. Interacts with RAC1. Interacts with calprotectin (S100A8/9). Interacts with NRROS; the interaction is direct and impairs formation of a stable NADPH oxidase complex. Interacts with CYBC1; CYBC1 may act as a chaperone stabilizing Cytochrome b-245 heterodimer. The CYBA-CYBB complex interacts with GBP7. Requires FAD as cofactor. Post-translationally, glycosylated. In terms of processing, phosphorylated on Ser and Thr residues by PKC during neutrophils activation. Phosphorylation enhances the NADPH oxidase activity and stimulates its interaction with RAC2, NCF2/p67-phox, and NCF1/p47-phox. Undergoes 'Lys-48'-linked polyubiquitination, likely by RNF145, triggering endoplasmic reticulum-associated degradation. In terms of tissue distribution, detected in neutrophils (at protein level).

Its subcellular location is the cell membrane. The catalysed reaction is NADPH + 2 O2 = 2 superoxide + NADP(+) + H(+). Catalytic subunit of the phagocyte NADPH oxidase complex that mediates the transfer of electrons from cytosolic NADPH to O2 to produce the superoxide anion (O2(-)). In the activated complex, electrons are first transferred from NADPH to flavin adenine dinucleotide (FAD) and subsequently transferred via two heme molecules to molecular oxygen, producing superoxide through an outer-sphere reaction. Activation of the NADPH oxidase complex is initiated by the assembly of cytosolic subunits of the NADPH oxidase complex with the core NADPH oxidase complex to form a complex at the plasma membrane or phagosomal membrane. This activation process is initiated by phosphorylation dependent binding of the cytosolic NCF1/p47-phox subunit to the C-terminus of CYBA/p22-phox. NADPH oxidase complex assembly is impaired through interaction with NRROS. The chain is NADPH oxidase 2 from Homo sapiens (Human).